The chain runs to 207 residues: Large ribosomal subunit protein uL4 (207 aa).

The disordered stretch occupies residues 50-76; it reads KTKTVSEVSGTTKKPFKQKGTGNARQG.

Belongs to the universal ribosomal protein uL4 family. Part of the 50S ribosomal subunit.

Functionally, one of the primary rRNA binding proteins, this protein initially binds near the 5'-end of the 23S rRNA. It is important during the early stages of 50S assembly. It makes multiple contacts with different domains of the 23S rRNA in the assembled 50S subunit and ribosome. Forms part of the polypeptide exit tunnel. This is Large ribosomal subunit protein uL4 from Rickettsia typhi (strain ATCC VR-144 / Wilmington).